Consider the following 407-residue polypeptide: MLRWITAGESHGRALVALVDGMVAGVEVTSTEIADQLARRRLGYGRGARMAFERDAVTVLSGLRHGSTLGGPIAIEIGNTEWPKWEAVMAADPLDPAAAAELENSARNAPLTRPRPGHADYAGMLKYGFDDARPVLERASARETAARVAAGTVARAFLRQALGVEVLSHVVSIGASAPYDGPPPQPEDLPAIDASPVRAFDGQAEKSMIAEIEAAKKDGDTLGGVVEVVALGLPVGLGSFTSGENRLDSQLAAAVMGIQAIKGVEIGDGFETARRRGSRAHDEMYPGTDGVVRSTNRAGGLEGGMTNGQPLRVRAAMKPISTVPKALATVDLATGDEAVAIHQRSDVCAVPAAAVVVETMVALVLARVTLEKFGGDSLAETRRNIEAYQRSVADREAPAARARAIRG.

Arginine 40 and arginine 46 together coordinate NADP(+). FMN is bound by residues 138–140 (RAS) and 259–260 (QA). Residues 275–284 (RRGSRAHDEM) show a composition bias toward basic and acidic residues. The segment at 275–308 (RRGSRAHDEMYPGTDGVVRSTNRAGGLEGGMTNG) is disordered. FMN contacts are provided by residues glycine 303, 318–322 (KPIST), and arginine 344.

The protein belongs to the chorismate synthase family. In terms of assembly, homotetramer. The cofactor is FMNH2.

It catalyses the reaction 5-O-(1-carboxyvinyl)-3-phosphoshikimate = chorismate + phosphate. It functions in the pathway metabolic intermediate biosynthesis; chorismate biosynthesis; chorismate from D-erythrose 4-phosphate and phosphoenolpyruvate: step 7/7. Functionally, catalyzes the anti-1,4-elimination of the C-3 phosphate and the C-6 proR hydrogen from 5-enolpyruvylshikimate-3-phosphate (EPSP) to yield chorismate, which is the branch point compound that serves as the starting substrate for the three terminal pathways of aromatic amino acid biosynthesis. This reaction introduces a second double bond into the aromatic ring system. The polypeptide is Chorismate synthase (Mycobacterium marinum (strain ATCC BAA-535 / M)).